The sequence spans 185 residues: Cbp/p300-interacting transactivator 4 (185 aa).

Disordered regions lie at residues 15–64 (PRPP…VAYG) and 95–130 (YPGRATMPPGAPGGPSGPQPAPGAPAPPLQPPAHAL). Pro residues predominate over residues 103 to 125 (PGAPGGPSGPQPAPGAPAPPLQP).

The protein belongs to the CITED family. Interacts via its C-terminal region with the CH1 domain of CREBBP and EP300. Interacts with all TFAP2/AP-2 isoforms.

The protein resides in the nucleus. It localises to the cytoplasm. In terms of biological role, acts as a transcriptional coactivator for TFAP2/AP-2. Enhances estrogen-dependent transactivation mediated by estrogen receptors. May function as an inhibitor of transactivation by HIF1A by disrupting HIF1A interaction with CREBBP. May be involved in regulation of gene expression during development and differentiation of blood cells, endothelial cells and mammary epithelial cells. In Bos taurus (Bovine), this protein is Cbp/p300-interacting transactivator 4 (CITED4).